A 260-amino-acid polypeptide reads, in one-letter code: Indole-3-glycerol phosphate synthase (260 aa).

It belongs to the TrpC family.

The catalysed reaction is 1-(2-carboxyphenylamino)-1-deoxy-D-ribulose 5-phosphate + H(+) = (1S,2R)-1-C-(indol-3-yl)glycerol 3-phosphate + CO2 + H2O. It participates in amino-acid biosynthesis; L-tryptophan biosynthesis; L-tryptophan from chorismate: step 4/5. The polypeptide is Indole-3-glycerol phosphate synthase (Lacticaseibacillus paracasei (strain ATCC 334 / BCRC 17002 / CCUG 31169 / CIP 107868 / KCTC 3260 / NRRL B-441) (Lactobacillus paracasei)).